The following is a 156-amino-acid chain: N-glycosidase Npun_R5314 (156 aa).

Belongs to the YbiA family.

The enzyme catalyses 2,5-diamino-6-hydroxy-4-(5-phosphoribosylamino)-pyrimidine + H2O = 2,5,6-triamino-4-hydroxypyrimidine + D-ribose 5-phosphate. The catalysed reaction is 5-amino-6-(5-phospho-D-ribosylamino)uracil + H2O = 5,6-diaminouracil + D-ribose 5-phosphate. Functionally, catalyzes the hydrolysis of the N-glycosidic bond in the first two intermediates of riboflavin biosynthesis, which are highly reactive metabolites, yielding relatively innocuous products. Thus, can divert a surplus of harmful intermediates into relatively harmless products and pre-empt the damage these intermediates would otherwise do. May act on other substrates in vivo. Has no activity against GTP, nucleoside monophosphates or ADP-ribose. This is N-glycosidase Npun_R5314 from Nostoc punctiforme (strain ATCC 29133 / PCC 73102).